The sequence spans 91 residues: Small ribosomal subunit protein bS18 (91 aa).

It belongs to the bacterial ribosomal protein bS18 family. As to quaternary structure, part of the 30S ribosomal subunit. Forms a tight heterodimer with protein bS6.

Its function is as follows. Binds as a heterodimer with protein bS6 to the central domain of the 16S rRNA, where it helps stabilize the platform of the 30S subunit. In Paraburkholderia phytofirmans (strain DSM 17436 / LMG 22146 / PsJN) (Burkholderia phytofirmans), this protein is Small ribosomal subunit protein bS18.